Here is a 276-residue protein sequence, read N- to C-terminus: Large ribosomal subunit protein uL2 (276 aa).

Residues 212 to 276 are disordered; that stretch reads NRHRGIRPQT…KLIISRKKHK (65 aa). Positions 257–276 are enriched in basic residues; it reads YKTRKKKASDKLIISRKKHK.

This sequence belongs to the universal ribosomal protein uL2 family. Part of the 50S ribosomal subunit. Forms a bridge to the 30S subunit in the 70S ribosome.

Its function is as follows. One of the primary rRNA binding proteins. Required for association of the 30S and 50S subunits to form the 70S ribosome, for tRNA binding and peptide bond formation. It has been suggested to have peptidyltransferase activity; this is somewhat controversial. Makes several contacts with the 16S rRNA in the 70S ribosome. This chain is Large ribosomal subunit protein uL2, found in Helicobacter acinonychis (strain Sheeba).